The chain runs to 91 residues: Sec-independent protein translocase protein TatA (91 aa).

A helical membrane pass occupies residues 1–21 (MGAMQPMHWLIVAVVVVILFG).

Belongs to the TatA/E family. As to quaternary structure, the Tat system comprises two distinct complexes: a TatABC complex, containing multiple copies of TatA, TatB and TatC subunits, and a separate TatA complex, containing only TatA subunits. Substrates initially bind to the TatABC complex, which probably triggers association of the separate TatA complex to form the active translocon.

The protein localises to the cell membrane. Part of the twin-arginine translocation (Tat) system that transports large folded proteins containing a characteristic twin-arginine motif in their signal peptide across membranes. TatA could form the protein-conducting channel of the Tat system. The polypeptide is Sec-independent protein translocase protein TatA (Rhodococcus erythropolis (strain PR4 / NBRC 100887)).